The following is a 542-amino-acid chain: Cytochrome P450 79B1 (542 aa).

A helical membrane pass occupies residues 21–41 (FSNMYLLTTLQAFVAITLVML). Cysteine 478 serves as a coordination point for heme.

It belongs to the cytochrome P450 family. It depends on heme as a cofactor.

Its subcellular location is the membrane. Functionally, converts tyrosine to para-hydrophenylacetaldoxime in para-hydroxybenzylglucosinolate biosynthesis. This chain is Cytochrome P450 79B1 (CYP79B1), found in Sinapis alba (White mustard).